Here is a 228-residue protein sequence, read N- to C-terminus: Ephrin-A5b (228 aa).

An N-terminal signal peptide occupies residues 1–20 (MLQAEMIVFVGVILWMCVFS). In terms of domain architecture, Ephrin RBD spans 29 to 162 (ADRYAVFWNR…KLKVFVRPPN (134 aa)). The N-linked (GlcNAc...) asparagine glycan is linked to Asn-37. Disulfide bonds link Cys-62–Cys-102 and Cys-90–Cys-151. A compositionally biased stretch (basic and acidic residues) spans 184-198 (LEPRDDTSHEAEPSR). Positions 184-205 (LEPRDDTSHEAEPSRSDVSTSG) are disordered. Ser-204 carries GPI-anchor amidated serine lipidation. Residues 205-228 (GLRHQTSRPLLALLLLCISLYLLL) constitute a propeptide, removed in mature form.

It belongs to the ephrin family. In terms of tissue distribution, widespread expression in the embryo.

The protein localises to the cell membrane. In terms of biological role, cell surface GPI-bound ligand for Eph receptors, a family of receptor tyrosine kinases which are crucial for migration, repulsion and adhesion during neuronal, vascular and epithelial development. Binds promiscuously Eph receptors residing on adjacent cells, leading to contact-dependent bidirectional signaling into neighboring cells. Induces compartmentalized signaling within a caveolae-like membrane microdomain when bound to the extracellular domain of its cognate receptor. This signaling event requires the activity of the Fyn tyrosine kinase. Activates the epha3 receptor to regulate cell-cell adhesion and cytoskeletal organization. With the receptor epha2 may regulate lens fiber cells shape and interactions and be important for lens transparency maintenance. May function actively to stimulate axon fasciculation. Controls axon growth and may be involved in the creation of the retino-tectal map. The sequence is that of Ephrin-A5b (efna5b) from Danio rerio (Zebrafish).